A 463-amino-acid polypeptide reads, in one-letter code: Putative ankyrin repeat protein R579 (463 aa).

ANK repeat units follow at residues 124–154, 156–181, 242–271, 273–299, 300–328, 329–355, 356–385, and 387–416; these read LKTD…KCTI, SITR…SENI, KEKN…QFNP, IYLW…DYRP, HIDR…VSQE, NINE…MGAD, INYK…DITT, and GSND…TITL.

In Acanthamoeba polyphaga (Amoeba), this protein is Putative ankyrin repeat protein R579.